Consider the following 273-residue polypeptide: 4-hydroxy-tetrahydrodipicolinate reductase (273 aa).

Residues 12–17 (GAGGRM) and Glu-38 each bind NAD(+). Residue Arg-39 participates in NADP(+) binding. NAD(+) is bound by residues 102-104 (GTT) and 126-129 (AANF). His-159 acts as the Proton donor/acceptor in catalysis. His-160 serves as a coordination point for (S)-2,3,4,5-tetrahydrodipicolinate. Lys-163 (proton donor) is an active-site residue. Residue 169 to 170 (GT) participates in (S)-2,3,4,5-tetrahydrodipicolinate binding.

It belongs to the DapB family. Homotetramer.

Its subcellular location is the cytoplasm. The enzyme catalyses (S)-2,3,4,5-tetrahydrodipicolinate + NAD(+) + H2O = (2S,4S)-4-hydroxy-2,3,4,5-tetrahydrodipicolinate + NADH + H(+). It carries out the reaction (S)-2,3,4,5-tetrahydrodipicolinate + NADP(+) + H2O = (2S,4S)-4-hydroxy-2,3,4,5-tetrahydrodipicolinate + NADPH + H(+). The protein operates within amino-acid biosynthesis; L-lysine biosynthesis via DAP pathway; (S)-tetrahydrodipicolinate from L-aspartate: step 4/4. Functionally, catalyzes the conversion of 4-hydroxy-tetrahydrodipicolinate (HTPA) to tetrahydrodipicolinate. The chain is 4-hydroxy-tetrahydrodipicolinate reductase from Salmonella agona (strain SL483).